Consider the following 133-residue polypeptide: Mitochondrial import inner membrane translocase subunit TIM17-3 (133 aa).

A run of 4 helical transmembrane segments spans residues 15–35, 63–83, 90–105, and 115–128; these read IVNA…VYHF, GGTF…LVRI, WNSI…VLSI, and SAVM…VLNP.

Belongs to the Tim17/Tim22/Tim23 family. Component of the TIM17:23 complex at least composed of TIM23, TIM17 and TIM50. The complex interacts with the TIM44 component of the PAM complex. As to expression, expressed in cotyledons, roots, flowers and leaves.

The protein localises to the mitochondrion inner membrane. In terms of biological role, essential component of the TIM17:23 complex, a complex that mediates the translocation of transit peptide-containing proteins across the mitochondrial inner membrane. Links the inner and outer membranes. This is Mitochondrial import inner membrane translocase subunit TIM17-3 (TIM17-3) from Arabidopsis thaliana (Mouse-ear cress).